A 273-amino-acid polypeptide reads, in one-letter code: Orotidine 5'-phosphate decarboxylase (273 aa).

The active-site Proton donor is K95.

The protein belongs to the OMP decarboxylase family. Type 2 subfamily.

It catalyses the reaction orotidine 5'-phosphate + H(+) = UMP + CO2. It participates in pyrimidine metabolism; UMP biosynthesis via de novo pathway; UMP from orotate: step 2/2. This is Orotidine 5'-phosphate decarboxylase from Bordetella bronchiseptica (strain ATCC BAA-588 / NCTC 13252 / RB50) (Alcaligenes bronchisepticus).